The primary structure comprises 308 residues: Coenzyme PQQ synthesis protein B (308 aa).

It belongs to the PqqB family.

Its pathway is cofactor biosynthesis; pyrroloquinoline quinone biosynthesis. Its function is as follows. May be involved in the transport of PQQ or its precursor to the periplasm. This is Coenzyme PQQ synthesis protein B from Klebsiella pneumoniae (strain 342).